The following is a 473-amino-acid chain: Photosystem II CP43 reaction center protein (473 aa).

Positions 1–14 (MKILYSLRRFYHVE) are excised as a propeptide. Position 15 is an N-acetylthreonine (threonine 15). The residue at position 15 (threonine 15) is a Phosphothreonine. Transmembrane regions (helical) follow at residues 69–93 (LFEV…PHLA), 134–155 (LLGP…KDRN), 178–200 (KALY…RKIT), 255–275 (KPFA…LSYS), and 291–312 (WFNN…ASQA). [CaMn4O5] cluster is bound at residue glutamate 367. Residues 447 to 471 (RARAAAAGFEKGIDRDLEPVLYMNP) form a helical membrane-spanning segment.

Belongs to the PsbB/PsbC family. PsbC subfamily. In terms of assembly, PSII is composed of 1 copy each of membrane proteins PsbA, PsbB, PsbC, PsbD, PsbE, PsbF, PsbH, PsbI, PsbJ, PsbK, PsbL, PsbM, PsbT, PsbX, PsbY, PsbZ, Psb30/Ycf12, at least 3 peripheral proteins of the oxygen-evolving complex and a large number of cofactors. It forms dimeric complexes. Binds multiple chlorophylls and provides some of the ligands for the Ca-4Mn-5O cluster of the oxygen-evolving complex. It may also provide a ligand for a Cl- that is required for oxygen evolution. PSII binds additional chlorophylls, carotenoids and specific lipids. is required as a cofactor. Phosphorylated on threonine residue(s); phosphorylation increases with increasing light levels.

The protein resides in the plastid. It localises to the chloroplast thylakoid membrane. In terms of biological role, one of the components of the core complex of photosystem II (PSII). It binds chlorophyll and helps catalyze the primary light-induced photochemical processes of PSII. PSII is a light-driven water:plastoquinone oxidoreductase, using light energy to abstract electrons from H(2)O, generating O(2) and a proton gradient subsequently used for ATP formation. The chain is Photosystem II CP43 reaction center protein from Secale cereale (Rye).